Here is a 332-residue protein sequence, read N- to C-terminus: Serpentine receptor class alpha-10 (332 aa).

Residues 1–26 (MTSSNISICATEDQMVLQTSLLLRVN) are Extracellular-facing. A helical transmembrane segment spans residues 27-47 (VILMTTVAIFTFVLTYRALFI). At 48–64 (LKQRPIFHKSTKILLYT) the chain is on the cytoplasmic side. A helical membrane pass occupies residues 65-85 (SLIFVNIHEIIFMVIQCVAFI). Topologically, residues 86-109 (RSFTLSDKPCEIMRTTLECRFKNH) are extracellular. The chain crosses the membrane as a helical span at residues 110 to 132 (VLIFGIAGMNFNQFGLTVDRLLA). Residues 133 to 146 (TVIPQTYSHLGSFP) lie on the Cytoplasmic side of the membrane. The helical transmembrane segment at 147–167 (GILISILVIGCSIAAPLIIAI) threads the bilayer. At 168 to 191 (GDPYDDIVPNCFFFPQHSAPRANV) the chain is on the extracellular side. The chain crosses the membrane as a helical span at residues 192–212 (FLIILSALVIASIFLNLIIIF). Residues 213–239 (ANKKLEKGTRYYVSQRYQKREALISTR) are Cytoplasmic-facing. The chain crosses the membrane as a helical span at residues 240–260 (IIVYIAASQFLGMVLYSTIVL). Residues 261-276 (TLRLHKSMIPVSMYHN) are Extracellular-facing. A helical transmembrane segment spans residues 277-297 (IVWWAYTVPFAAVALPALLIH). Residues 298 to 332 (RINLVGSNRKRVINRITAKVETQEEHMKSLKELWG) lie on the Cytoplasmic side of the membrane.

This sequence belongs to the nematode receptor-like protein sra family.

It is found in the membrane. The chain is Serpentine receptor class alpha-10 from Caenorhabditis briggsae.